Here is a 541-residue protein sequence, read N- to C-terminus: Glycogen synthase (541 aa).

Residue K17 participates in ADP-alpha-D-glucose binding. The interval 497–541 is disordered; it reads LARPASPPDTAPVGKPARRRRTTALSTTARAHPVARAAGREKIRA.

This sequence belongs to the glycosyltransferase 1 family. Bacterial/plant glycogen synthase subfamily.

The catalysed reaction is [(1-&gt;4)-alpha-D-glucosyl](n) + ADP-alpha-D-glucose = [(1-&gt;4)-alpha-D-glucosyl](n+1) + ADP + H(+). Its pathway is glycan biosynthesis; glycogen biosynthesis. Synthesizes alpha-1,4-glucan chains using ADP-glucose. This is Glycogen synthase from Ralstonia nicotianae (strain ATCC BAA-1114 / GMI1000) (Ralstonia solanacearum).